Consider the following 360-residue polypeptide: Isopentenyl-diphosphate delta-isomerase (360 aa).

6–7 is a substrate binding site; the sequence is RK. Residues Thr62, 63–65, Ser93, and Asn122 contribute to the FMN site; that span reads GMT. Residue 93-95 coordinates substrate; that stretch reads SQR. Gln157 provides a ligand contact to substrate. Glu158 lines the Mg(2+) pocket. Residues Lys189, Ser214, Thr219, 272-274, and 293-294 contribute to the FMN site; these read GIR and AL.

Belongs to the IPP isomerase type 2 family. In terms of assembly, homooctamer. Dimer of tetramers. It depends on FMN as a cofactor. Requires NADPH as cofactor. Mg(2+) is required as a cofactor.

It localises to the cytoplasm. It catalyses the reaction isopentenyl diphosphate = dimethylallyl diphosphate. In terms of biological role, involved in the biosynthesis of isoprenoids. Catalyzes the 1,3-allylic rearrangement of the homoallylic substrate isopentenyl (IPP) to its allylic isomer, dimethylallyl diphosphate (DMAPP). The polypeptide is Isopentenyl-diphosphate delta-isomerase (Ignicoccus hospitalis (strain KIN4/I / DSM 18386 / JCM 14125)).